Consider the following 481-residue polypeptide: UDP-glucose 6-dehydrogenase 1 (481 aa).

NAD(+)-binding positions include 8-13 (GAGYVG), Asp33, Arg38, 86-90 (VNTPT), 127-128 (ST), and Glu162. Residues 158–162 (EFLAE), 217–224 (KLAANAFL), and 257–270 (RIGAKFLNASVGFG) each bind substrate. Catalysis depends on Cys273, which acts as the Nucleophile. 273-276 (CFQK) is a binding site for NAD(+). 335–336 (FK) lines the substrate pocket. An NAD(+)-binding site is contributed by Arg343. Ser394 is subject to Phosphoserine. Arg448 provides a ligand contact to substrate.

This sequence belongs to the UDP-glucose/GDP-mannose dehydrogenase family.

It carries out the reaction UDP-alpha-D-glucose + 2 NAD(+) + H2O = UDP-alpha-D-glucuronate + 2 NADH + 3 H(+). Its pathway is nucleotide-sugar biosynthesis; UDP-alpha-D-glucuronate biosynthesis; UDP-alpha-D-glucuronate from UDP-alpha-D-glucose: step 1/1. Its function is as follows. Involved in the biosynthesis of UDP-glucuronic acid (UDP-GlcA), providing nucleotide sugars for cell-wall polymers. This is UDP-glucose 6-dehydrogenase 1 (UGD1) from Oryza sativa subsp. japonica (Rice).